A 484-amino-acid chain; its full sequence is tRNA sulfurtransferase (484 aa).

Residues 63–167 (EAFAERLACI…NDNLYLIDKR (105 aa)) enclose the THUMP domain. ATP contacts are provided by residues 185 to 186 (LI), Lys-267, Gly-289, and Gln-298. Cysteines 346 and 458 form a disulfide. Residues 406-484 (ISAGEIIIDV…GYNNVKVYRP (79 aa)) form the Rhodanese domain. Catalysis depends on Cys-458, which acts as the Cysteine persulfide intermediate.

Belongs to the ThiI family.

It is found in the cytoplasm. The enzyme catalyses [ThiI sulfur-carrier protein]-S-sulfanyl-L-cysteine + a uridine in tRNA + 2 reduced [2Fe-2S]-[ferredoxin] + ATP + H(+) = [ThiI sulfur-carrier protein]-L-cysteine + a 4-thiouridine in tRNA + 2 oxidized [2Fe-2S]-[ferredoxin] + AMP + diphosphate. It carries out the reaction [ThiS sulfur-carrier protein]-C-terminal Gly-Gly-AMP + S-sulfanyl-L-cysteinyl-[cysteine desulfurase] + AH2 = [ThiS sulfur-carrier protein]-C-terminal-Gly-aminoethanethioate + L-cysteinyl-[cysteine desulfurase] + A + AMP + 2 H(+). The protein operates within cofactor biosynthesis; thiamine diphosphate biosynthesis. Its function is as follows. Catalyzes the ATP-dependent transfer of a sulfur to tRNA to produce 4-thiouridine in position 8 of tRNAs, which functions as a near-UV photosensor. Also catalyzes the transfer of sulfur to the sulfur carrier protein ThiS, forming ThiS-thiocarboxylate. This is a step in the synthesis of thiazole, in the thiamine biosynthesis pathway. The sulfur is donated as persulfide by IscS. The protein is tRNA sulfurtransferase of Shewanella pealeana (strain ATCC 700345 / ANG-SQ1).